The sequence spans 137 residues: Protein archease (137 aa).

Ca(2+) contacts are provided by D11, D136, and I137.

It belongs to the archease family.

In terms of biological role, activates the tRNA-splicing ligase complex by facilitating the enzymatic turnover of catalytic subunit RtcB. Acts by promoting the guanylylation of RtcB, a key intermediate step in tRNA ligation. Can also alter the NTP specificity of RtcB such that ATP, dGTP or ITP is used efficiently. This Archaeoglobus fulgidus (strain ATCC 49558 / DSM 4304 / JCM 9628 / NBRC 100126 / VC-16) protein is Protein archease.